A 201-amino-acid polypeptide reads, in one-letter code: Sterile alpha motif domain-containing protein 12 (201 aa).

The 67-residue stretch at 77–143 (WTQQDVCKWL…LQQVLQLKVR (67 aa)) folds into the SAM domain.

As to expression, expressed in the brain.

The chain is Sterile alpha motif domain-containing protein 12 (SAMD12) from Homo sapiens (Human).